The following is a 353-amino-acid chain: UDP-N-acetylglucosamine--N-acetylmuramyl-(pentapeptide) pyrophosphoryl-undecaprenol N-acetylglucosamine transferase (353 aa).

UDP-N-acetyl-alpha-D-glucosamine contacts are provided by residues 10–12 (TGG), N124, S183, and Q283.

It belongs to the glycosyltransferase 28 family. MurG subfamily.

Its subcellular location is the cell inner membrane. It catalyses the reaction di-trans,octa-cis-undecaprenyl diphospho-N-acetyl-alpha-D-muramoyl-L-alanyl-D-glutamyl-meso-2,6-diaminopimeloyl-D-alanyl-D-alanine + UDP-N-acetyl-alpha-D-glucosamine = di-trans,octa-cis-undecaprenyl diphospho-[N-acetyl-alpha-D-glucosaminyl-(1-&gt;4)]-N-acetyl-alpha-D-muramoyl-L-alanyl-D-glutamyl-meso-2,6-diaminopimeloyl-D-alanyl-D-alanine + UDP + H(+). It participates in cell wall biogenesis; peptidoglycan biosynthesis. Functionally, cell wall formation. Catalyzes the transfer of a GlcNAc subunit on undecaprenyl-pyrophosphoryl-MurNAc-pentapeptide (lipid intermediate I) to form undecaprenyl-pyrophosphoryl-MurNAc-(pentapeptide)GlcNAc (lipid intermediate II). This chain is UDP-N-acetylglucosamine--N-acetylmuramyl-(pentapeptide) pyrophosphoryl-undecaprenol N-acetylglucosamine transferase, found in Helicobacter pylori (strain P12).